Consider the following 189-residue polypeptide: Elongation factor P (189 aa).

The protein belongs to the elongation factor P family.

The protein localises to the cytoplasm. It participates in protein biosynthesis; polypeptide chain elongation. In terms of biological role, involved in peptide bond synthesis. Stimulates efficient translation and peptide-bond synthesis on native or reconstituted 70S ribosomes in vitro. Probably functions indirectly by altering the affinity of the ribosome for aminoacyl-tRNA, thus increasing their reactivity as acceptors for peptidyl transferase. In Campylobacter fetus subsp. fetus (strain 82-40), this protein is Elongation factor P.